The primary structure comprises 104 residues: NADH-quinone oxidoreductase subunit K (104 aa).

A run of 3 helical transmembrane segments spans residues 4–24 (VPAS…LFGA), 31–51 (VIVL…LVAF), and 67–87 (LFTM…LIAL).

This sequence belongs to the complex I subunit 4L family. As to quaternary structure, NDH-1 is composed of 14 different subunits. Subunits NuoA, H, J, K, L, M, N constitute the membrane sector of the complex.

The protein localises to the cell membrane. The enzyme catalyses a quinone + NADH + 5 H(+)(in) = a quinol + NAD(+) + 4 H(+)(out). In terms of biological role, NDH-1 shuttles electrons from NADH, via FMN and iron-sulfur (Fe-S) centers, to quinones in the respiratory chain. The immediate electron acceptor for the enzyme in this species is believed to be a menaquinone. Couples the redox reaction to proton translocation (for every two electrons transferred, four hydrogen ions are translocated across the cytoplasmic membrane), and thus conserves the redox energy in a proton gradient. The protein is NADH-quinone oxidoreductase subunit K of Bacillus cereus (strain AH820).